The sequence spans 289 residues: Acetyl-coenzyme A carboxylase carboxyl transferase subunit beta (289 aa).

Residues Met-36–Glu-289 form the CoA carboxyltransferase N-terminal domain. Zn(2+) contacts are provided by Cys-40, Cys-43, Cys-58, and Cys-61. The C4-type zinc-finger motif lies at Cys-40 to Cys-61.

It belongs to the AccD/PCCB family. As to quaternary structure, acetyl-CoA carboxylase is a heterohexamer composed of biotin carboxyl carrier protein (AccB), biotin carboxylase (AccC) and two subunits each of ACCase subunit alpha (AccA) and ACCase subunit beta (AccD). Zn(2+) serves as cofactor.

It localises to the cytoplasm. The enzyme catalyses N(6)-carboxybiotinyl-L-lysyl-[protein] + acetyl-CoA = N(6)-biotinyl-L-lysyl-[protein] + malonyl-CoA. Its pathway is lipid metabolism; malonyl-CoA biosynthesis; malonyl-CoA from acetyl-CoA: step 1/1. Functionally, component of the acetyl coenzyme A carboxylase (ACC) complex. Biotin carboxylase (BC) catalyzes the carboxylation of biotin on its carrier protein (BCCP) and then the CO(2) group is transferred by the transcarboxylase to acetyl-CoA to form malonyl-CoA. This chain is Acetyl-coenzyme A carboxylase carboxyl transferase subunit beta, found in Limosilactobacillus reuteri subsp. reuteri (strain JCM 1112) (Lactobacillus reuteri).